The primary structure comprises 540 residues: Glucose-6-phosphate isomerase (540 aa).

The active-site Proton donor is Glu350. Catalysis depends on residues His381 and Lys503.

This sequence belongs to the GPI family.

Its subcellular location is the cytoplasm. The enzyme catalyses alpha-D-glucose 6-phosphate = beta-D-fructose 6-phosphate. The protein operates within carbohydrate biosynthesis; gluconeogenesis. It functions in the pathway carbohydrate degradation; glycolysis; D-glyceraldehyde 3-phosphate and glycerone phosphate from D-glucose: step 2/4. In terms of biological role, catalyzes the reversible isomerization of glucose-6-phosphate to fructose-6-phosphate. This Burkholderia cenocepacia (strain ATCC BAA-245 / DSM 16553 / LMG 16656 / NCTC 13227 / J2315 / CF5610) (Burkholderia cepacia (strain J2315)) protein is Glucose-6-phosphate isomerase.